A 508-amino-acid polypeptide reads, in one-letter code: Maturase K (508 aa).

Belongs to the intron maturase 2 family. MatK subfamily.

It is found in the plastid. The protein resides in the chloroplast. Usually encoded in the trnK tRNA gene intron. Probably assists in splicing its own and other chloroplast group II introns. This is Maturase K from Manilkara zapota (Sapodilla plum).